The primary structure comprises 487 residues: Zinc finger protein 345 (487 aa).

C2H2-type zinc fingers lie at residues 62 to 84, 90 to 112, 118 to 140, 146 to 168, 174 to 196, 202 to 224, 230 to 252, 258 to 280, 286 to 308, 314 to 336, 342 to 364, 370 to 392, 398 to 420, 426 to 448, and 454 to 476; these read LECK…QRIH, YECK…QRIH, YECN…QRIH, YECK…QIIH, YECK…HRIH, YECK…RRVH, YICN…QRIH, YVCK…QRIH, YECK…QRMH, YECK…QLIH, YECR…QRIH, and YECK…KKNH.

The protein belongs to the krueppel C2H2-type zinc-finger protein family.

It is found in the nucleus. May be involved in transcriptional regulation. The protein is Zinc finger protein 345 (ZNF345) of Bos taurus (Bovine).